A 236-amino-acid chain; its full sequence is 15,16-dihydrobiliverdin:ferredoxin oxidoreductase (236 aa).

The protein belongs to the HY2 family.

It carries out the reaction 15,16-dihydrobiliverdin + oxidized 2[4Fe-4S]-[ferredoxin] = biliverdin IXalpha + reduced 2[4Fe-4S]-[ferredoxin] + 2 H(+). Functionally, catalyzes the two-electron reduction of biliverdin IX-alpha at the C15 methine bridge. The polypeptide is 15,16-dihydrobiliverdin:ferredoxin oxidoreductase (pebA) (Synechococcus sp. (strain WH8020)).